We begin with the raw amino-acid sequence, 285 residues long: Bifunctional protein FolD 2 (285 aa).

NADP(+)-binding positions include 164–166 (GRS), serine 189, and valine 230.

The protein belongs to the tetrahydrofolate dehydrogenase/cyclohydrolase family. Homodimer.

The catalysed reaction is (6R)-5,10-methylene-5,6,7,8-tetrahydrofolate + NADP(+) = (6R)-5,10-methenyltetrahydrofolate + NADPH. It catalyses the reaction (6R)-5,10-methenyltetrahydrofolate + H2O = (6R)-10-formyltetrahydrofolate + H(+). It participates in one-carbon metabolism; tetrahydrofolate interconversion. Its function is as follows. Catalyzes the oxidation of 5,10-methylenetetrahydrofolate to 5,10-methenyltetrahydrofolate and then the hydrolysis of 5,10-methenyltetrahydrofolate to 10-formyltetrahydrofolate. The chain is Bifunctional protein FolD 2 from Geobacter metallireducens (strain ATCC 53774 / DSM 7210 / GS-15).